Consider the following 192-residue polypeptide: Orotate phosphoribosyltransferase (192 aa).

116–124 is a binding site for 5-phospho-alpha-D-ribose 1-diphosphate; that stretch reads EDIVTTGLS. Residues Thr-120 and Arg-148 each contribute to the orotate site.

The protein belongs to the purine/pyrimidine phosphoribosyltransferase family. PyrE subfamily. In terms of assembly, homodimer. Mg(2+) serves as cofactor.

The enzyme catalyses orotidine 5'-phosphate + diphosphate = orotate + 5-phospho-alpha-D-ribose 1-diphosphate. The protein operates within pyrimidine metabolism; UMP biosynthesis via de novo pathway; UMP from orotate: step 1/2. Its function is as follows. Catalyzes the transfer of a ribosyl phosphate group from 5-phosphoribose 1-diphosphate to orotate, leading to the formation of orotidine monophosphate (OMP). This is Orotate phosphoribosyltransferase from Brucella abortus (strain S19).